Consider the following 84-residue polypeptide: CDC42 small effector protein 2 (84 aa).

S-palmitoyl cysteine attachment occurs at residues Cys-10 and Cys-11. Positions 29 to 42 (IGEPTNFVHTAHVG) constitute a CRIB domain. Phosphoserine occurs at positions 43 and 52.

Belongs to the CDC42SE/SPEC family. Interacts with CDC42 (in GTP-bound form). Interacts weakly with RAC1 and not at all with RHOA. In terms of tissue distribution, widely expressed. Expressed at higher level in T-lymphocytes. Highly expressed in CCRF-CEM T-lymphocytes, Jurkat T-lymphocytes, and Raji B-lymphocytes compared (at protein level).

It localises to the cytoplasm. It is found in the cytoskeleton. The protein localises to the cell membrane. The protein resides in the cell projection. Its subcellular location is the phagocytic cup. Functionally, probably involved in the organization of the actin cytoskeleton by acting downstream of CDC42, inducing actin filament assembly. Alters CDC42-induced cell shape changes. In activated T-cells, may play a role in CDC42-mediated F-actin accumulation at the immunological synapse. May play a role in early contractile events in phagocytosis in macrophages. The protein is CDC42 small effector protein 2 (CDC42SE2) of Homo sapiens (Human).